Consider the following 444-residue polypeptide: UDP-N-acetylglucosamine 1-carboxyvinyltransferase (444 aa).

22–23 (KN) contacts phosphoenolpyruvate. A UDP-N-acetyl-alpha-D-glucosamine-binding site is contributed by arginine 94. The Proton donor role is filled by aspartate 119. UDP-N-acetyl-alpha-D-glucosamine is bound by residues aspartate 309 and valine 331.

It belongs to the EPSP synthase family. MurA subfamily.

The protein resides in the cytoplasm. The catalysed reaction is phosphoenolpyruvate + UDP-N-acetyl-alpha-D-glucosamine = UDP-N-acetyl-3-O-(1-carboxyvinyl)-alpha-D-glucosamine + phosphate. Its pathway is cell wall biogenesis; peptidoglycan biosynthesis. Functionally, cell wall formation. Adds enolpyruvyl to UDP-N-acetylglucosamine. This Chlamydia trachomatis serovar A (strain ATCC VR-571B / DSM 19440 / HAR-13) protein is UDP-N-acetylglucosamine 1-carboxyvinyltransferase.